Here is a 143-residue protein sequence, read N- to C-terminus: uncharacterized protein (143 aa).

Residues 65 to 85 (LVWMLVGTIVLSLDIIFPALV) traverse the membrane as a helical segment.

Its subcellular location is the membrane. This is an uncharacterized protein from Saccharomyces cerevisiae (strain ATCC 204508 / S288c) (Baker's yeast).